The sequence spans 516 residues: Chromosomal replication initiator protein DnaA (516 aa).

Residues Met-1–Leu-72 form a domain I, interacts with DnaA modulators region. Positions Leu-72–Ala-179 are domain II. Positions Asn-180 to Ser-396 are domain III, AAA+ region. Residues Gly-224, Gly-226, Lys-227, and Thr-228 each contribute to the ATP site. Positions His-397–Thr-516 are domain IV, binds dsDNA.

The protein belongs to the DnaA family. As to quaternary structure, oligomerizes as a right-handed, spiral filament on DNA at oriC.

Its subcellular location is the cytoplasm. Functionally, plays an essential role in the initiation and regulation of chromosomal replication. ATP-DnaA binds to the origin of replication (oriC) to initiate formation of the DNA replication initiation complex once per cell cycle. Binds the DnaA box (a 9 base pair repeat at the origin) and separates the double-stranded (ds)DNA. Forms a right-handed helical filament on oriC DNA; dsDNA binds to the exterior of the filament while single-stranded (ss)DNA is stabiized in the filament's interior. The ATP-DnaA-oriC complex binds and stabilizes one strand of the AT-rich DNA unwinding element (DUE), permitting loading of DNA polymerase. After initiation quickly degrades to an ADP-DnaA complex that is not apt for DNA replication. Binds acidic phospholipids. In Marinomonas sp. (strain MWYL1), this protein is Chromosomal replication initiator protein DnaA.